A 1295-amino-acid polypeptide reads, in one-letter code: Phosphoribosylformylglycinamidine synthase (1295 aa).

Residues 305-327 (WPGAATGSGGEIRDEGATGRGAK) form a disordered region. ATP contacts are provided by residues 307 to 318 (GAATGSGGEIRD) and alanine 678. The Mg(2+) site is built by glutamate 718, asparagine 722, and aspartate 884. Serine 886 serves as a coordination point for ATP. The region spanning 1042–1295 (VAVLREQGVN…IFRNARKQLG (254 aa)) is the Glutamine amidotransferase type-1 domain. The active-site Nucleophile is the cysteine 1135. Residues histidine 1260 and glutamate 1262 contribute to the active site.

This sequence in the N-terminal section; belongs to the FGAMS family. As to quaternary structure, monomer. Both N-terminus methionine truncation and retention have been observed for this protein.

It is found in the cytoplasm. It catalyses the reaction N(2)-formyl-N(1)-(5-phospho-beta-D-ribosyl)glycinamide + L-glutamine + ATP + H2O = 2-formamido-N(1)-(5-O-phospho-beta-D-ribosyl)acetamidine + L-glutamate + ADP + phosphate + H(+). It functions in the pathway purine metabolism; IMP biosynthesis via de novo pathway; 5-amino-1-(5-phospho-D-ribosyl)imidazole from N(2)-formyl-N(1)-(5-phospho-D-ribosyl)glycinamide: step 1/2. Phosphoribosylformylglycinamidine synthase involved in the purines biosynthetic pathway. Catalyzes the ATP-dependent conversion of formylglycinamide ribonucleotide (FGAR) and glutamine to yield formylglycinamidine ribonucleotide (FGAM) and glutamate. In Escherichia coli (strain K12), this protein is Phosphoribosylformylglycinamidine synthase.